Consider the following 377-residue polypeptide: Probable G-protein coupled receptor 27 (377 aa).

Residues 1-24 (MANASEPGGGGGGAEAAALGLRLA) are Extracellular-facing. Asn3 carries N-linked (GlcNAc...) asparagine glycosylation. A helical transmembrane segment spans residues 25–45 (TLSLLLCVSLAGNVLFALLIV). The Cytoplasmic portion of the chain corresponds to 46 to 56 (RERSLHRAPYY). The helical transmembrane segment at 57 to 77 (LLLDLCLADGLRALACLPAVM) threads the bilayer. The Extracellular segment spans residues 78–98 (LAARRAAAAAGTPPGALGCKL). Cys96 and Cys173 are disulfide-bonded. Residues 99–119 (LAFLAALFCFHAAFLLLGVGV) form a helical membrane-spanning segment. Topologically, residues 120 to 140 (TRYLAIAHHRFYAERLAGWPC) are cytoplasmic. A helical transmembrane segment spans residues 141-161 (AAMLVCAAWALALAAAFPPVL). The Extracellular portion of the chain corresponds to 162-183 (DGGGADDEDAPCALEQRPDGAP). The helical transmembrane segment at 184–204 (GALGFLLLLAAVVGATHLVYL) threads the bilayer. The Cytoplasmic portion of the chain corresponds to 205–287 (RLLFFIHDRR…FKTEKRLCKM (83 aa)). A helical transmembrane segment spans residues 288–308 (FYAITLLFLLLWGPYVVASYL). Residues 309–322 (RVLVRPGAVPQAYL) are Extracellular-facing. Residues 323 to 343 (TASVWLTFAQAGINPVVCFLF) traverse the membrane as a helical segment. At 344–377 (NRELRDCFRAQFPCCQSPQATQATLPCDLKGIGL) the chain is on the cytoplasmic side.

It belongs to the G-protein coupled receptor 1 family. In terms of tissue distribution, expressed as a 3.0 kb transcript, in whole brain, hippocampus, striatum, frontal cortex, thalamus, pons and hypothalamus. A lower molecular weight transcript was detected in all regions examined, except the hypothalamus.

Its subcellular location is the cell membrane. Orphan receptor. Possible candidate for amine-like G-protein coupled receptor. The protein is Probable G-protein coupled receptor 27 (Gpr27) of Rattus norvegicus (Rat).